Here is a 79-residue protein sequence, read N- to C-terminus: UPF0154 protein SUB0399 (79 aa).

The helical transmembrane segment at 4–24 (AIWILLIVLALIGGLFGGVFI) threads the bilayer.

It belongs to the UPF0154 family.

It is found in the cell membrane. This Streptococcus uberis (strain ATCC BAA-854 / 0140J) protein is UPF0154 protein SUB0399.